Reading from the N-terminus, the 119-residue chain is uncharacterized protein (119 aa).

This is an uncharacterized protein from Bos taurus (Bovine).